We begin with the raw amino-acid sequence, 209 residues long: N-(5'-phosphoribosyl)anthranilate isomerase (209 aa).

The protein belongs to the TrpF family.

The enzyme catalyses N-(5-phospho-beta-D-ribosyl)anthranilate = 1-(2-carboxyphenylamino)-1-deoxy-D-ribulose 5-phosphate. It functions in the pathway amino-acid biosynthesis; L-tryptophan biosynthesis; L-tryptophan from chorismate: step 3/5. This is N-(5'-phosphoribosyl)anthranilate isomerase from Granulibacter bethesdensis (strain ATCC BAA-1260 / CGDNIH1).